The chain runs to 1729 residues: 182 kDa tankyrase-1-binding protein (1729 aa).

The span at 1 to 12 shows a compositional bias: polar residues; sequence MKVSTLRESSAM. Positions 1–151 are disordered; the sequence is MKVSTLRESS…VRKAPAPFRP (151 aa). S14 is subject to Phosphoserine. Residues 46–63 are compositionally biased toward low complexity; it reads ALPAKPALPAKPSLLVPV. Basic and acidic residues predominate over residues 117–127; that stretch reads TGKEEAGKEEP. The residue at position 131 (T131) is a Phosphothreonine. S178, S221, and S228 each carry phosphoserine. Disordered regions lie at residues 184-450, 484-603, and 657-880; these read GSRL…LAAL, PSGL…ESPL, and ETTQ…SSRD. The tract at residues 210–1572 is acidic; sequence DEDGSTLFRG…TEILDSAMYR (1363 aa). A compositionally biased stretch (basic and acidic residues) spans 230–245; sequence AECREEHSKTPEERSL. The residue at position 239 (T239) is a Phosphothreonine. Residues S287 and S301 each carry the phosphoserine modification. Positions 352 to 363 are enriched in low complexity; that stretch reads PSPGLPAEGAPE. The segment covering 364–374 has biased composition (pro residues); that stretch reads APRPSSPPPEV. Phosphoserine is present on residues S429, S435, S437, S494, and S498. Composition is skewed to low complexity over residues 500–512, 524–541, and 572–583; these read ITEA…AAEA, VSQQ…SGSS, and LPTTEGTPGLPL. T501 carries the phosphothreonine modification. A phosphoserine mark is found at S601, S672, S691, S695, S712, S724, S744, S762, and S806. Polar residues predominate over residues 738–753; that stretch reads PQPSSFSPSSWCQGAS. Positions 803–812 are enriched in polar residues; it reads ASSSQDQSKV. Residue T833 is modified to Phosphothreonine. Phosphoserine occurs at positions 836, 851, 872, 877, 882, and 893. Over residues 858 to 872 the composition is skewed to basic and acidic residues; the sequence is RDAELQDQEFGKRDS. Y897 is subject to Phosphotyrosine. A disordered region spans residues 897–1083; the sequence is YASQDANEQG…ADLEDGEMGK (187 aa). Phosphoserine occurs at positions 899, 920, 936, and 976. Position 979 is a phosphothreonine (T979). 17 positions are modified to phosphoserine: S983, S987, S1004, S1008, S1013, S1024, S1029, S1054, S1073, S1091, S1103, S1133, S1138, S1158, S1178, S1248, and S1253. A compositionally biased stretch (basic and acidic residues) spans 1012–1021; the sequence is GSRDAGRPGE. Residues 1043–1054 are compositionally biased toward polar residues; that stretch reads RDQSSWQNSDAS. Positions 1240-1302 are disordered; that stretch reads EVGEGGGHSQ…GAVCSPGESK (63 aa). Phosphothreonine is present on T1282. Phosphoserine occurs at positions 1297, 1328, 1331, 1383, and 1385. The tract at residues 1362 to 1561 is disordered; the sequence is AREHGVGGVS…SPSQDFSFIE (200 aa). Residues 1389–1400 show a composition bias toward basic and acidic residues; it reads EARDPLEARELG. A compositionally biased stretch (polar residues) spans 1406–1419; that stretch reads GPETQGEDYSSSSL. S1435, S1439, S1450, S1452, S1473, S1476, S1503, and S1506 each carry phosphoserine. The tract at residues 1450 to 1542 is tankyrase-binding; the sequence is SGSQGLLEEM…SDQGPAQTSR (93 aa). Phosphothreonine is present on T1518. Phosphoserine occurs at positions 1533, 1545, and 1558. Position 1563 is a phosphothreonine (T1563). Residues 1575–1729 are disordered; the sequence is ANLGRKRGHR…QALKLKKKKV (155 aa). A compositionally biased stretch (basic residues) spans 1577 to 1586; sequence LGRKRGHRAP. Over residues 1602–1615 the composition is skewed to basic and acidic residues; it reads SDAHLFQDSTEPRA. Phosphoserine is present on residues S1620, S1621, and S1631. Residues 1629-1635 carry the Nuclear localization signal motif; the sequence is PQSRRTR. K1644 carries the post-translational modification N6-methyllysine. Phosphoserine occurs at positions 1652, 1666, and 1715. Over residues 1665–1679 the composition is skewed to basic and acidic residues; sequence RSAEEGELAESKSSQ. The Nuclear localization signal motif lies at 1723–1729; that stretch reads KLKKKKV.

As to quaternary structure, binds to the ANK repeat domain of TNKS1 and TNKS2. Post-translationally, ADP-ribosylated by TNKS1 (in vitro). Detected in testis, ovary, lung, skeletal muscle, heart, prostate and pancreas, and at very low levels in brain and peripheral blood leukocytes.

The protein resides in the nucleus. The protein localises to the cytoplasm. It is found in the cytoskeleton. It localises to the chromosome. The sequence is that of 182 kDa tankyrase-1-binding protein (TNKS1BP1) from Homo sapiens (Human).